The following is a 515-amino-acid chain: Methionine--tRNA ligase (515 aa).

The short motif at 13-23 is the 'HIGH' region element; sequence AYPNGKPHIGH. Positions 300-304 match the 'KMSKS' region motif; the sequence is KMSKS. Lysine 303 lines the ATP pocket.

It belongs to the class-I aminoacyl-tRNA synthetase family. MetG type 2B subfamily. Monomer.

The protein localises to the cytoplasm. The catalysed reaction is tRNA(Met) + L-methionine + ATP = L-methionyl-tRNA(Met) + AMP + diphosphate. Is required not only for elongation of protein synthesis but also for the initiation of all mRNA translation through initiator tRNA(fMet) aminoacylation. This is Methionine--tRNA ligase from Brucella suis biovar 1 (strain 1330).